The chain runs to 353 residues: uncharacterized protein (353 aa).

The first 28 residues, 1–28 (MHLTIMRRFAVLLLLAIFLGGCSGSNGA), serve as a signal peptide directing secretion.

This is an uncharacterized protein from Archaeoglobus fulgidus (strain ATCC 49558 / DSM 4304 / JCM 9628 / NBRC 100126 / VC-16).